A 266-amino-acid chain; its full sequence is Putative tyrosine phosphatase 197R (266 aa).

In terms of domain architecture, Tyrosine-protein phosphatase spans 15–167 (RPTLGSLSDK…LFGSQNINND (153 aa)). Cys111 (phosphocysteine intermediate) is an active-site residue.

The protein belongs to the protein-tyrosine phosphatase family.

It carries out the reaction O-phospho-L-tyrosyl-[protein] + H2O = L-tyrosyl-[protein] + phosphate. In Invertebrate iridescent virus 6 (IIV-6), this protein is Putative tyrosine phosphatase 197R.